The following is a 451-amino-acid chain: Putative metabolite transport protein YyaJ (451 aa).

Residues 1-29 (MNTIFKQKNTHPFSNAANRLDRLPISRVH) are Cytoplasmic-facing. A helical transmembrane segment spans residues 30 to 50 (FQVLTALGIVYFFDLADLFTL). The Extracellular portion of the chain corresponds to 51–60 (SNVAPALIEH). The helical transmembrane segment at 61 to 81 (WGIPLSTIANVTAASFLGMFL) threads the bilayer. At 82-97 (GASLGGRLSDRIGRKK) the chain is on the cytoplasmic side. The chain crosses the membrane as a helical span at residues 98-118 (ALNLFVFVFSIASLCNAAAWD). Residues 119-124 (IPSLMT) lie on the Extracellular side of the membrane. A helical transmembrane segment spans residues 125-145 (FRFLTGFGVAAAMVITNSYLA). The Cytoplasmic segment spans residues 146-157 (EFFPSSVRGKYI). The chain crosses the membrane as a helical span at residues 158 to 178 (SFCAMIGLIGVPITNIVSAFV). At 179–182 (IPLG) the chain is on the extracellular side. Residues 183–203 (SWGWRLVFVWGAVGLIYFFFI) traverse the membrane as a helical segment. At 204-270 (HRLEESPRWH…LLKGRNLKIT (67 aa)) the chain is on the cytoplasmic side. Residues 271–291 (IVLSAVWIFETFGFYGFASWV) form a helical membrane-spanning segment. The Extracellular segment spans residues 292–305 (PSLLKSNGVTMENT). The helical transmembrane segment at 306-326 (LWYNVLHSVGAPLGALLGSMI) threads the bilayer. Over 327-333 (SERFQRK) the chain is Cytoplasmic. Residues 334–354 (WILAASAFLTAIAGLLYGMTF) form a helical membrane-spanning segment. Over 355-357 (IPI) the chain is Extracellular. The helical transmembrane segment at 358–378 (MIIVFGFIVNITERVFTSNLY) threads the bilayer. Topologically, residues 379–396 (AYTSEPYPTEYRSSGSGL) are cytoplasmic. Residues 397 to 417 (AYGLGRFSNIFGSLLVGFIAV) form a helical membrane-spanning segment. The Extracellular portion of the chain corresponds to 418–421 (QLGY). Residues 422-442 (ISVFLFIGGCWLACSLLLIFF) traverse the membrane as a helical segment. The Cytoplasmic segment spans residues 443 to 451 (GPNTNAKQI).

Belongs to the major facilitator superfamily. Sugar transporter (TC 2.A.1.1) family.

It is found in the cell membrane. The polypeptide is Putative metabolite transport protein YyaJ (yyaJ) (Bacillus subtilis (strain 168)).